The chain runs to 241 residues: Ribonuclease PH (241 aa).

Phosphate contacts are provided by residues R86 and 124–126; that span reads GTR.

The protein belongs to the RNase PH family. As to quaternary structure, homohexameric ring arranged as a trimer of dimers.

The enzyme catalyses tRNA(n+1) + phosphate = tRNA(n) + a ribonucleoside 5'-diphosphate. Functionally, phosphorolytic 3'-5' exoribonuclease that plays an important role in tRNA 3'-end maturation. Removes nucleotide residues following the 3'-CCA terminus of tRNAs; can also add nucleotides to the ends of RNA molecules by using nucleoside diphosphates as substrates, but this may not be physiologically important. Probably plays a role in initiation of 16S rRNA degradation (leading to ribosome degradation) during starvation. The chain is Ribonuclease PH from Hamiltonella defensa subsp. Acyrthosiphon pisum (strain 5AT).